The following is a 161-amino-acid chain: MKERAAFSHMTEDGAVTMVDVGHKNPTQRTAIVRAVVEVSAATLDLLKHRALPKGDVLTTAKIAGIMAAKRTAELIPMCHPLAISYADVRFEVRDTPPSIALEAEVRTTGQTGVEMEALIAAQTAAATIYDMCKAVQKDIVIRDCRLVFKSGGKSGTFRAE.

Substrate is bound by residues 78–80 (MCH) and 116–117 (ME). Residue D131 is part of the active site.

The protein belongs to the MoaC family. Homohexamer; trimer of dimers.

The catalysed reaction is (8S)-3',8-cyclo-7,8-dihydroguanosine 5'-triphosphate = cyclic pyranopterin phosphate + diphosphate. It functions in the pathway cofactor biosynthesis; molybdopterin biosynthesis. Catalyzes the conversion of (8S)-3',8-cyclo-7,8-dihydroguanosine 5'-triphosphate to cyclic pyranopterin monophosphate (cPMP). In Nitratidesulfovibrio vulgaris (strain ATCC 29579 / DSM 644 / CCUG 34227 / NCIMB 8303 / VKM B-1760 / Hildenborough) (Desulfovibrio vulgaris), this protein is Cyclic pyranopterin monophosphate synthase.